The following is a 93-amino-acid chain: U12-lycotoxin-Ls1a (93 aa).

An N-terminal signal peptide occupies residues 1–18 (MKFAVILLFSLVVLTVAS). The propeptide occupies 19 to 38 (ESVEEVRREIDIEDLPEQQR).

The protein belongs to the neurotoxin 31 family. In terms of processing, contains 5 disulfide bonds. In terms of tissue distribution, expressed by the venom gland.

It localises to the secreted. The polypeptide is U12-lycotoxin-Ls1a (Lycosa singoriensis (Wolf spider)).